The primary structure comprises 150 residues: Transcriptional regulator MraZ (150 aa).

2 SpoVT-AbrB domains span residues 11 to 53 (TYTP…PFDE) and 82 to 125 (AVDQ…NKDT).

It belongs to the MraZ family. In terms of assembly, forms oligomers.

Its subcellular location is the cytoplasm. The protein resides in the nucleoid. This Bifidobacterium longum (strain NCC 2705) protein is Transcriptional regulator MraZ.